The chain runs to 823 residues: Polyadenylation and cleavage factor homolog 11 (823 aa).

The CID domain occupies 3-135; that stretch reads SVESAARDYR…ELDMKINKLD (133 aa). Disordered stretches follow at residues 142–176, 188–301, 340–395, 570–643, and 728–755; these read NPQTGRALRDDPQVMAPSQSRPAGNATSPAASTST, SSTP…KTLK, SSAP…LPAP, LPAP…EKRS, and WLTPRASDETNEQEADKPEEPLPGVASS. Composition is skewed to polar residues over residues 157 to 176 and 188 to 198; these read APSQSRPAGNATSPAASTST and SSTPGAASASK. The segment covering 200 to 226 has biased composition (basic and acidic residues); sequence VVEKTKSPGTVNKEKQVKKEPKQDPLD. Composition is skewed to low complexity over residues 227–242 and 342–353; these read KLLPSSSASKTSSSPA and APPFQHPQQHHP. Residues 374 to 390 show a composition bias toward pro residues; it reads PQDPAPIVPVQAPPPQQ. The span at 571–581 shows a compositional bias: low complexity; it reads PAPARSPSSPR. A compositionally biased stretch (polar residues) spans 609–624; the sequence is QPQQNARWGGANKQQN.

The protein is Polyadenylation and cleavage factor homolog 11 (pcf-11) of Caenorhabditis elegans.